We begin with the raw amino-acid sequence, 311 residues long: tRNA dimethylallyltransferase (311 aa).

16-23 is an ATP binding site; it reads GATASGKS. A substrate-binding site is contributed by 18-23; that stretch reads TASGKS. 2 interaction with substrate tRNA regions span residues 41-44 and 165-169; these read DSRQ and QRLIR.

Belongs to the IPP transferase family. As to quaternary structure, monomer. It depends on Mg(2+) as a cofactor.

The catalysed reaction is adenosine(37) in tRNA + dimethylallyl diphosphate = N(6)-dimethylallyladenosine(37) in tRNA + diphosphate. Its function is as follows. Catalyzes the transfer of a dimethylallyl group onto the adenine at position 37 in tRNAs that read codons beginning with uridine, leading to the formation of N6-(dimethylallyl)adenosine (i(6)A). The protein is tRNA dimethylallyltransferase of Chlorobium chlorochromatii (strain CaD3).